The primary structure comprises 514 residues: Ras-GEF domain-containing family member 1B-A (514 aa).

The 131-residue stretch at His76–Thr206 folds into the N-terminal Ras-GEF domain. The Ras-GEF domain maps to Asp246–Pro494.

As to expression, detected in oocytes, and in embryos at 4 to 120 hours post-fertilization (hpf). Detected along marginal blastomeres at early epiboly stage and throughout the margin at the onset of gastrulation. At 60% epiboly, strongest expression is found in the dorsal shield region and is restricted to the epiblast. Detected in the anterior border of the presomitic mesoderm at the end of epiboly. Detected in adaxial cells, in the somites and in the nervous system during somitogenesis. Detected in diencephalon and hindbrain and in cells surrounding the notochord, including adaxial cells and ventral mesendoderm, in 15-somite stage embryos. At 48 hpf, detected mainly in the brain.

Its function is as follows. Guanine nucleotide exchange factor (GEF) for Ras family proteins (in vitro). The polypeptide is Ras-GEF domain-containing family member 1B-A (rasgef1ba) (Danio rerio (Zebrafish)).